A 447-amino-acid chain; its full sequence is Ribosomal protein uS12 methylthiotransferase RimO (447 aa).

One can recognise an MTTase N-terminal domain in the interval 4-114 (PKVGFVSLGC…VMEAVHEYVP (111 aa)). Cys13, Cys49, Cys78, Cys147, Cys151, and Cys154 together coordinate [4Fe-4S] cluster. The 238-residue stretch at 133–370 (LTPKHYAYLK…MQVQQQISAA (238 aa)) folds into the Radical SAM core domain. The 71-residue stretch at 373–443 (QKRIGQTMTV…EYDLFAKLIK (71 aa)) folds into the TRAM domain.

It belongs to the methylthiotransferase family. RimO subfamily. The cofactor is [4Fe-4S] cluster.

The protein localises to the cytoplasm. The catalysed reaction is L-aspartate(89)-[ribosomal protein uS12]-hydrogen + (sulfur carrier)-SH + AH2 + 2 S-adenosyl-L-methionine = 3-methylsulfanyl-L-aspartate(89)-[ribosomal protein uS12]-hydrogen + (sulfur carrier)-H + 5'-deoxyadenosine + L-methionine + A + S-adenosyl-L-homocysteine + 2 H(+). Functionally, catalyzes the methylthiolation of an aspartic acid residue of ribosomal protein uS12. This Acinetobacter baumannii (strain AB0057) protein is Ribosomal protein uS12 methylthiotransferase RimO.